A 298-amino-acid polypeptide reads, in one-letter code: 4-hydroxy-tetrahydrodipicolinate synthase (298 aa).

T45 provides a ligand contact to pyruvate. Y133 (proton donor/acceptor) is an active-site residue. K161 acts as the Schiff-base intermediate with substrate in catalysis. I203 serves as a coordination point for pyruvate.

This sequence belongs to the DapA family. Homotetramer; dimer of dimers.

It is found in the cytoplasm. It catalyses the reaction L-aspartate 4-semialdehyde + pyruvate = (2S,4S)-4-hydroxy-2,3,4,5-tetrahydrodipicolinate + H2O + H(+). It functions in the pathway amino-acid biosynthesis; L-lysine biosynthesis via DAP pathway; (S)-tetrahydrodipicolinate from L-aspartate: step 3/4. Its function is as follows. Catalyzes the condensation of (S)-aspartate-beta-semialdehyde [(S)-ASA] and pyruvate to 4-hydroxy-tetrahydrodipicolinate (HTPA). This is 4-hydroxy-tetrahydrodipicolinate synthase from Wigglesworthia glossinidia brevipalpis.